A 554-amino-acid chain; its full sequence is Arginine--tRNA ligase (554 aa).

Residues 132 to 142 carry the 'HIGH' region motif; it reads ANPTGPIHLGG.

This sequence belongs to the class-I aminoacyl-tRNA synthetase family. As to quaternary structure, monomer.

The protein localises to the cytoplasm. The enzyme catalyses tRNA(Arg) + L-arginine + ATP = L-arginyl-tRNA(Arg) + AMP + diphosphate. In Kineococcus radiotolerans (strain ATCC BAA-149 / DSM 14245 / SRS30216), this protein is Arginine--tRNA ligase.